A 120-amino-acid polypeptide reads, in one-letter code: uncharacterized protein (120 aa).

This is an uncharacterized protein from Acanthamoeba polyphaga mimivirus (APMV).